Consider the following 767-residue polypeptide: Photosystem I P700 chlorophyll a apoprotein A1 (767 aa).

The interval 1-22 is disordered; sequence MTISPPESGEKNKKVLEDPVKA. Residues 8-22 are compositionally biased toward basic and acidic residues; the sequence is SGEKNKKVLEDPVKA. The next 8 membrane-spanning stretches (helical) occupy residues 76 to 99, 162 to 185, 201 to 225, 309 to 327, 368 to 391, 407 to 433, 455 to 477, and 558 to 576; these read IFSA…FHGA, LMAL…FHYH, LNHH…HIGA, VSHH…GHMY, RHAQ…HHMY, LGLF…IAMV, ALIS…LYIH, and LMIH…LILL. Residues Cys600 and Cys609 each coordinate [4Fe-4S] cluster. Transmembrane regions (helical) follow at residues 616–637 and 681–703; these read HVFL…HFSW and ISMY…MFLF. Divinylchlorophyll a' is bound at residue His692. The divinyl chlorophyll a site is built by Met700 and Tyr708. Residue Trp709 coordinates phylloquinone. A helical transmembrane segment spans residues 741–761; sequence AVGVTHFLVGGIATTWAFFHA.

This sequence belongs to the PsaA/PsaB family. The PsaA/B heterodimer binds the P700 divinyl chlorophyll special pair and subsequent electron acceptors. PSI consists of a core antenna complex that captures photons, and an electron transfer chain that converts photonic excitation into a charge separation. The cyanobacterial PSI reaction center is composed of one copy each of PsaA,B,C,D,E,F,I,J,K,L,M and X, and forms trimeric complexes. Requires PSI electron transfer chain: 5 divinyl chlorophyll a, 1 divinyl chlorophyll a', 2 phylloquinones and 3 4Fe-4S clusters. PSI core antenna: 90 divinyl chlorophyll a, 22 carotenoids, 3 phospholipids and 1 galactolipid. P700 is a divinyl chlorophyll a/divinyl chlorophyll a' dimer, A0 is one or more divinyl chlorophyll a, A1 is one or both phylloquinones and FX is a shared 4Fe-4S iron-sulfur center. as cofactor.

It is found in the cellular thylakoid membrane. It carries out the reaction reduced [plastocyanin] + hnu + oxidized [2Fe-2S]-[ferredoxin] = oxidized [plastocyanin] + reduced [2Fe-2S]-[ferredoxin]. In terms of biological role, psaA and PsaB bind P700, the primary electron donor of photosystem I (PSI), as well as the electron acceptors A0, A1 and FX. PSI is a plastocyanin/cytochrome c6-ferredoxin oxidoreductase, converting photonic excitation into a charge separation, which transfers an electron from the donor P700 chlorophyll pair to the spectroscopically characterized acceptors A0, A1, FX, FA and FB in turn. Oxidized P700 is reduced on the lumenal side of the thylakoid membrane by plastocyanin or cytochrome c6. The protein is Photosystem I P700 chlorophyll a apoprotein A1 of Prochlorococcus marinus (strain AS9601).